Here is a 462-residue protein sequence, read N- to C-terminus: Argininosuccinate lyase (462 aa).

Belongs to the lyase 1 family. Argininosuccinate lyase subfamily.

It localises to the cytoplasm. The catalysed reaction is 2-(N(omega)-L-arginino)succinate = fumarate + L-arginine. It functions in the pathway amino-acid biosynthesis; L-arginine biosynthesis; L-arginine from L-ornithine and carbamoyl phosphate: step 3/3. This chain is Argininosuccinate lyase, found in Bacillus cereus (strain ZK / E33L).